We begin with the raw amino-acid sequence, 197 residues long: Elongation factor Ts (197 aa).

Residues 81-84 (TDFV) are involved in Mg(2+) ion dislocation from EF-Tu.

It belongs to the EF-Ts family.

It is found in the cytoplasm. Associates with the EF-Tu.GDP complex and induces the exchange of GDP to GTP. It remains bound to the aminoacyl-tRNA.EF-Tu.GTP complex up to the GTP hydrolysis stage on the ribosome. This Thermotoga neapolitana (strain ATCC 49049 / DSM 4359 / NBRC 107923 / NS-E) protein is Elongation factor Ts.